Here is a 214-residue protein sequence, read N- to C-terminus: Large ribosomal subunit protein uL4 (214 aa).

A disordered region spans residues 56-86; the sequence is THKVKNRAEVSGTGKKPWKQKSTGKARAGSK. Residues 71–85 are compositionally biased toward basic residues; sequence KPWKQKSTGKARAGS.

It belongs to the universal ribosomal protein uL4 family. Part of the 50S ribosomal subunit.

In terms of biological role, one of the primary rRNA binding proteins, this protein initially binds near the 5'-end of the 23S rRNA. It is important during the early stages of 50S assembly. It makes multiple contacts with different domains of the 23S rRNA in the assembled 50S subunit and ribosome. Functionally, forms part of the polypeptide exit tunnel. In Mesomycoplasma hyopneumoniae (strain 232) (Mycoplasma hyopneumoniae), this protein is Large ribosomal subunit protein uL4.